We begin with the raw amino-acid sequence, 678 residues long: GAS2-like protein 1 (678 aa).

N-acetylalanine is present on alanine 2. The 122-residue stretch at 27-148 (EAMKEDLADW…CLLEVARRGA (122 aa)) folds into the Calponin-homology (CH) domain. The GAR domain maps to 203-275 (NDLRNLDELV…HYLDKHDPCR (73 aa)). Residues 276-291 (CSSSTHRLPQQRTGTF) show a composition bias toward polar residues. Disordered stretches follow at residues 276-524 (CSSS…FRRL) and 538-678 (AASH…DSSM). Serine 306 and serine 316 each carry phosphoserine. A compositionally biased stretch (basic and acidic residues) spans 327–340 (GTKEGPETPLRPRD). Residue threonine 334 is modified to Phosphothreonine. A phosphoserine mark is found at serine 352 and serine 355. The segment covering 354–365 (DSDSSASSAQSG) has biased composition (low complexity). Positions 370 to 381 (RSDDSATGSRRE) are enriched in basic and acidic residues. Low complexity predominate over residues 392 to 403 (PASPRRPTAPRS). Serine 394 bears the Phosphoserine mark. Over residues 404–413 (QSRDRLDRGR) the composition is skewed to basic and acidic residues. Residues serine 436 and serine 438 each carry the phosphoserine modification. The span at 437–454 (QSREEQAVLMVRRDRDGQ) shows a compositional bias: basic and acidic residues. Over residues 461–471 (GRGGGGSGGSG) the composition is skewed to gly residues. Serine 482 and serine 489 each carry phosphoserine. A compositionally biased stretch (pro residues) spans 485–495 (APRPSRGPSPG). Arginine 490 carries the post-translational modification Omega-N-methylarginine. A Phosphoserine modification is found at serine 493. Threonine 501 is subject to Phosphothreonine. Residue arginine 507 is modified to Omega-N-methylarginine. Composition is skewed to low complexity over residues 509–519 (PLQLDPQQEQQ) and 554–568 (DSAY…SSLS). Arginine 630 bears the Omega-N-methylarginine mark. Positions 631–641 (GRMDTQPDRKP) are enriched in basic and acidic residues. Serine 654 is subject to Phosphoserine. Over residues 666 to 678 (HSVTPRTEPDSSM) the composition is skewed to polar residues.

Belongs to the GAS2 family. In terms of assembly, interacts with MAPRE1.

The protein resides in the cytoplasm. Its subcellular location is the cytoskeleton. The protein localises to the stress fiber. Functionally, seems to be involved in the cross-linking of microtubules and microfilaments. Regulates microtubule dynamics and stability by interacting with microtubule plus-end tracking proteins, such as MAPRE1, to regulate microtubule growth along actin stress fibers. This chain is GAS2-like protein 1 (Gas2l1), found in Mus musculus (Mouse).